Reading from the N-terminus, the 273-residue chain is WIMGHMVNANYQIDEFVNLGANSIETDVSFDSSANPEYTYHGVPCDCRRWCKKWEYFNNFLKALRKATTPGDSKYHEKLVLVVFDLKTGSLYDNQAYDAGKKLAKNLLQHYWNNGNNGGRAYIVLSIPNLAHYKLITGFKETLKTEGHPELMEKVGYDFSGNDDIGDVANAYKKAGVTGHVWQSDGITNCLLRGLDRVRKAVANRDSSNGYINKVYYWTVDKRQSTRDALDAGVDGIMTNYPDVIADVLNESAYKAKFRIASYDDNPWETFKN.

Residue His5 is part of the active site. Mg(2+)-binding residues include Glu25 and Asp27. His41 serves as the catalytic Nucleophile. Cystine bridges form between Cys45–Cys51 and Cys47–Cys190. Asp85 contacts Mg(2+). Asn250 carries N-linked (GlcNAc...) asparagine glycosylation.

This sequence belongs to the arthropod phospholipase D family. Class II subfamily. It depends on Mg(2+) as a cofactor. In terms of tissue distribution, expressed by the venom gland.

The protein resides in the secreted. It carries out the reaction an N-(acyl)-sphingosylphosphocholine = an N-(acyl)-sphingosyl-1,3-cyclic phosphate + choline. The enzyme catalyses an N-(acyl)-sphingosylphosphoethanolamine = an N-(acyl)-sphingosyl-1,3-cyclic phosphate + ethanolamine. It catalyses the reaction a 1-acyl-sn-glycero-3-phosphocholine = a 1-acyl-sn-glycero-2,3-cyclic phosphate + choline. The catalysed reaction is a 1-acyl-sn-glycero-3-phosphoethanolamine = a 1-acyl-sn-glycero-2,3-cyclic phosphate + ethanolamine. Dermonecrotic toxins cleave the phosphodiester linkage between the phosphate and headgroup of certain phospholipids (sphingolipid and lysolipid substrates), forming an alcohol (often choline) and a cyclic phosphate. This toxin acts on sphingomyelin (SM). It may also act on ceramide phosphoethanolamine (CPE), lysophosphatidylcholine (LPC) and lysophosphatidylethanolamine (LPE), but not on lysophosphatidylserine (LPS), and lysophosphatidylglycerol (LPG). It acts by transphosphatidylation, releasing exclusively cyclic phosphate products as second products. Induces dermonecrosis, hemolysis, increased vascular permeability, edema, inflammatory response, and platelet aggregation. The chain is Dermonecrotic toxin LapSicTox-alphaIB2 from Loxosceles apachea (Apache recluse spider).